Consider the following 309-residue polypeptide: Calcium homeostasis modulator protein 5 (309 aa).

Topologically, residues methionine 1–lysine 15 are cytoplasmic. The chain crosses the membrane as a helical span at residues threonine 16–valine 37. A 1,2-diacyl-sn-glycero-3-phosphate-binding residues include arginine 32 and valine 37. The Extracellular segment spans residues alanine 38–valine 45. Cystine bridges form between cysteine 41/cysteine 127, cysteine 43/cysteine 158, and cysteine 142/cysteine 149. A helical membrane pass occupies residues glutamate 46–asparagine 70. The Cytoplasmic portion of the chain corresponds to asparagine 71 to valine 99. The chain crosses the membrane as a helical span at residues leucine 100–methionine 129. An a 1,2-diacyl-sn-glycero-3-phosphate-binding site is contributed by asparagine 121. At serine 130–serine 174 the chain is on the extracellular side. Residues leucine 175 to tyrosine 200 traverse the membrane as a helical segment. The Cytoplasmic portion of the chain corresponds to alanine 201 to leucine 309. Residue arginine 202 participates in a 1,2-diacyl-sn-glycero-3-phosphate binding.

It belongs to the CALHM family. In terms of assembly, oligomerizes to form undecameric cone-shaped channels.

It is found in the membrane. In terms of biological role, may assemble to form large pore channels with gating and ion conductance likely regulated by membrane lipids. The sequence is that of Calcium homeostasis modulator protein 5 from Mus musculus (Mouse).